Consider the following 347-residue polypeptide: Mitochondrial carrier protein rim2 (347 aa).

Solcar repeat units follow at residues 32–136 (PPPL…GKRI), 146–234 (ENSQ…FKHA), and 256–345 (LDWG…IMHF). The next 6 membrane-spanning stretches (helical) occupy residues 38–58 (FIAG…LDVV), 105–125 (TRAL…ARSI), 152–172 (LMAA…IWLV), 214–233 (SLLG…KFKH), 262–282 (LGGA…HEVV), and 317–338 (LYGG…LFGS).

It localises to the mitochondrion inner membrane. It carries out the reaction 5-methyl-UTP(out) + UTP(in) = 5-methyl-UTP(in) + UTP(out). In terms of biological role, mitochondrial transporter that imports/exports pyrimidine nucleotides into and from mitochondria. Selectively transports uridine, thymidine, and cytosine (deoxy)nucleoside di- and triphosphates by an antiport mechanism. Also transports, with lower efficiency, uridine, thymidine, and cytosine (deoxy)nucleoside monophosphates as well as guanosine (deoxy)nucleoside di- and triphosphate. May import (deoxy)nucleoside triphosphates in exchange for intramitochondrial (deoxy)nucleoside monophosphates, thus providing precursors necessary for de novo synthesis of mitochondrial DNA and RNA while exporting products of their catabolism. Mediates the transport of iron and other divalent metal ions like copper and zinc across the mitochondrial inner membrane in a pyrimidine nucleotide-dependent fashion. Catalyzes the co-import of pyrimidine nucleotides and divalent metal ions including ferrous iron. Participates in mitochondrial genome maintenance, regulation of mitochondrial membrane potential and mitochondrial respiration. The polypeptide is Mitochondrial carrier protein rim2 (rim2) (Schizosaccharomyces pombe (strain 972 / ATCC 24843) (Fission yeast)).